Consider the following 444-residue polypeptide: uncharacterized protein (444 aa).

The segment covering methionine 1–arginine 11 has biased composition (basic and acidic residues). A disordered region spans residues methionine 1–proline 35.

This is an uncharacterized protein from Caenorhabditis elegans.